A 463-amino-acid polypeptide reads, in one-letter code: MGRLFGTDGVRGVANRELTPELVLALGAAAARCLANSGEPGRRVAVIGRDPRASGEMLEAAVIAGLTSAGVDALRVGVLPTPAVAYLTGAYDADFGVMISASHNPMVDNGIKIFGPGGHKLDDDTEDQIEDLVTGGPGLRPAGVAIGRVIDAEDATERYLRHVGKASTIRLDGLTVVVDCAHGAASSAAPRAYRAAGARVIAINADPNGININDRCGSTDLGSLRSAVLAHRADLGLAHDGDADRCLAVDANGDLVDGDAIMVVLALAMQEAGELSSNTLVTTVMSNLGLHLAMRSVGVIVRTTDVGDRYVLEELRAGDFSLGGEQSGHIVMPALGSTGDGIITGLRLMTRMVQTSSSLAALASAMRALPQVLINVEVADKTTAAAAPLVQTAVETAEVELGNTGRILLRPSGTEPMIRVMVEAAEEDVAHRVATRVAAAVSAQGSPLRCWNPDAISGVELRL.

Ser102 acts as the Phosphoserine intermediate in catalysis. Residues Ser102, Asp240, Asp242, and Asp244 each coordinate Mg(2+). At Ser102 the chain carries Phosphoserine.

It belongs to the phosphohexose mutase family. Requires Mg(2+) as cofactor. Post-translationally, activated by phosphorylation.

The enzyme catalyses alpha-D-glucosamine 1-phosphate = D-glucosamine 6-phosphate. Catalyzes the conversion of glucosamine-6-phosphate to glucosamine-1-phosphate. This Mycobacterium leprae (strain Br4923) protein is Phosphoglucosamine mutase.